The following is a 307-amino-acid chain: Fructose-bisphosphate aldolase (307 aa).

Position 49 (serine 49) interacts with D-glyceraldehyde 3-phosphate. Aspartate 82 functions as the Proton donor in the catalytic mechanism. Residues histidine 83, aspartate 104, glutamate 134, and histidine 180 each coordinate Zn(2+). Dihydroxyacetone phosphate is bound at residue glycine 181. Position 210 (histidine 210) interacts with Zn(2+). Residues 211-213 (GAS) and 253-256 (NTDT) contribute to the dihydroxyacetone phosphate site.

It belongs to the class II fructose-bisphosphate aldolase family. Homodimer. Zn(2+) is required as a cofactor.

It carries out the reaction beta-D-fructose 1,6-bisphosphate = D-glyceraldehyde 3-phosphate + dihydroxyacetone phosphate. It participates in carbohydrate degradation; glycolysis; D-glyceraldehyde 3-phosphate and glycerone phosphate from D-glucose: step 4/4. Functionally, catalyzes the aldol condensation of dihydroxyacetone phosphate (DHAP or glycerone-phosphate) with glyceraldehyde 3-phosphate (G3P) to form fructose 1,6-bisphosphate (FBP) in gluconeogenesis and the reverse reaction in glycolysis. This Helicobacter pylori (strain ATCC 700392 / 26695) (Campylobacter pylori) protein is Fructose-bisphosphate aldolase (fba).